A 1401-amino-acid polypeptide reads, in one-letter code: Alpha-latrotoxin-Lt1a (1401 aa).

The first 20 residues, 1–20 (MISVGEIMERANHSLVRMRR), serve as a signal peptide directing secretion. Residues 17–20 (RMRR) are furin-like endopeptidase recognition region. Residues 238–257 (VLYALLYGTQTYVSVMFFLL) form a helix H8 is the probable transmembrane region of the tetrameric pore inserted in the target cell membrane region. Cysteine 413 and cysteine 1066 are oxidised to a cystine. ANK repeat units follow at residues 458 to 489 (LYNA…ATFD), 490 to 521 (HGRT…ELNQ), 525 to 554 (KGYT…SINS), 559 to 589 (FLQT…NINE), 593 to 622 (DGFT…DVNA), 626 to 656 (TGLT…DINA), 660 to 690 (NNIT…NANV), 695 to 723 (GLLS…NVNV), 729 to 758 (GGIT…NIEQ), 762 to 791 (EKYT…NFEA), 795 to 824 (SGAT…NWRD), 828 to 857 (NGQM…TVVD), 862 to 891 (NSDT…DINT), 895 to 924 (KGLA…NVYI), 928 to 957 (DGMN…KFEW), 971 to 1003 (EECA…GNFA), 1004 to 1033 (ICGP…SVDG), 1035 to 1064 (KTDT…KVNH), 1068 to 1097 (NGMT…DFRR), 1101 to 1131 (RGTT…DINI), 1137 to 1166 (DKDT…DVTI), and 1170 to 1199 (YDKT…KFRR). The segment at 1026 to 1032 (EEFLSVD) is 4C4.1 epitope. A furin-like endopeptidase recognition region region spans residues 1196–1199 (KFRR). The propeptide occupies 1200–1401 (EYKSSYGERS…SDGILTKKLM (202 aa)).

Belongs to the cationic peptide 01 (latrotoxin) family. 03 (alpha-latrotoxin) subfamily. As to quaternary structure, homotetramer in membranes. Post-translationally, processed by furin-like proteases at both the N- and C-termini. In terms of tissue distribution, expressed in venom gland, cephalothorax, and abdomen tissues from both males and females.

Its subcellular location is the secreted. It is found in the target cell membrane. Functionally, presynaptic neurotoxin that causes massive release of neurotransmitters from vertebrate (but not invertebrate) nerve terminals and endocrine cells via a complex mechanism involving activation of receptor(s) and toxin insertion into the plasma membrane with subsequent pore formation. Binds to neurexin-1-alpha (NRXN1) in a calcium dependent manner, adhesion G protein-coupled receptor L1 (ADGRL1, also termed latrophilin-1 and calcium-independent receptor of latrotoxin (CIRL)), and receptor-type tyrosine-protein phosphatase S (PTPRS), also termed PTP sigma. NRXN1 and PTPRS are suggested to provide a platform for binding and subsequent pore formation events. In contrast, binding to ADGRL1 does not involve oligomerization and channel formation, but direct downstream stimulation of the synaptic fusion machinery. This Latrodectus tredecimguttatus (Mediterranean black widow spider) protein is Alpha-latrotoxin-Lt1a.